The chain runs to 79 residues: Putative defensin-like protein 29 (79 aa).

The N-terminal stretch at 1–26 (MASSGKCVFLVFLCMVALLAPSEVHA) is a signal peptide. Disulfide bonds link C45/C65, C51/C74, and C55/C76.

It belongs to the DEFL family.

It is found in the secreted. The protein is Putative defensin-like protein 29 of Arabidopsis thaliana (Mouse-ear cress).